The following is a 431-amino-acid chain: Trigger factor (431 aa).

In terms of domain architecture, PPIase FKBP-type spans 158 to 243 (GYLVALETWS…VIEVSEPVLL (86 aa)).

It belongs to the FKBP-type PPIase family. Tig subfamily.

The protein resides in the cytoplasm. It catalyses the reaction [protein]-peptidylproline (omega=180) = [protein]-peptidylproline (omega=0). In terms of biological role, involved in protein export. Acts as a chaperone by maintaining the newly synthesized protein in an open conformation. Functions as a peptidyl-prolyl cis-trans isomerase. This Xylella fastidiosa (strain M23) protein is Trigger factor.